Consider the following 566-residue polypeptide: Arginine--tRNA ligase (566 aa).

Residues 123–133 carry the 'HIGH' region motif; the sequence is PNVAKPFHVGH.

Belongs to the class-I aminoacyl-tRNA synthetase family. In terms of assembly, monomer.

It localises to the cytoplasm. It carries out the reaction tRNA(Arg) + L-arginine + ATP = L-arginyl-tRNA(Arg) + AMP + diphosphate. The chain is Arginine--tRNA ligase from Alkaliphilus metalliredigens (strain QYMF).